We begin with the raw amino-acid sequence, 381 residues long: Homoserine O-succinyltransferase (381 aa).

An AB hydrolase-1 domain is found at 45 to 360 (NAVLVCHALN…PHGHDAFLLD (316 aa)). The active-site Nucleophile is the serine 151. Residue arginine 221 participates in substrate binding. Catalysis depends on residues aspartate 321 and histidine 354. Residue aspartate 355 coordinates substrate.

Belongs to the AB hydrolase superfamily. MetX family. As to quaternary structure, homodimer.

It is found in the cytoplasm. It carries out the reaction L-homoserine + succinyl-CoA = O-succinyl-L-homoserine + CoA. Its pathway is amino-acid biosynthesis; L-methionine biosynthesis via de novo pathway; O-succinyl-L-homoserine from L-homoserine: step 1/1. In terms of biological role, transfers a succinyl group from succinyl-CoA to L-homoserine, forming succinyl-L-homoserine. The polypeptide is Homoserine O-succinyltransferase (Paraburkholderia phytofirmans (strain DSM 17436 / LMG 22146 / PsJN) (Burkholderia phytofirmans)).